The chain runs to 141 residues: Hemoglobin subunit alpha-3 (141 aa).

The residue at position 1 (S1) is an N-acetylserine. The Globin domain occupies 1–141 (SLSASEKAAV…VSAVLTSKYR (141 aa)). H58 is an O2 binding site. H87 contributes to the heme b binding site.

The protein belongs to the globin family. Heterotetramer of two alpha chains and two beta chains. As to expression, red blood cells.

In terms of biological role, this is a tadpole (larval) alpha chain. In Aquarana catesbeiana (American bullfrog), this protein is Hemoglobin subunit alpha-3.